The sequence spans 447 residues: MVEKDTWKLITATALFTVAVTTITDYAWTSWQAQKQVIAQQKNKNKGGQTKSDTDKYHQYDEQFIRQSLKNNVEFLGEDTIEKLSNQYVVVVGAGGVGSWVVNSLVRSGCRKIRVVDFDQVSLSSLNRHSCAILNDVGTPKVECLRRHMREIAPWCEIDPINELWTLQNGERLTLGNGTPDFIVDCIDNIDTKVDLLEFAYNHGIKVISSMGASAKSDPTKLNVGDLATTEEDPLARVVRRKLKKRGILSGIPVVFSAEKPDPKKAKLLPLPDEEYERGKVDELSALKDFRVRILPVLGTMPSLFGLTITTWILSNISDKPLEPVEGKNRIKVYDGIYQSLAGQMSRVGIPSQRIPLALKDVSYLVEEVFKGKSPISGISTRLTLTKWDPSKPISLQNVVVLTKNEQKVHEDRVLKGKESLQDVYDAKVLKLVSQRFREEAYYSQFR.

3 helical membrane passes run 9-29, 86-106, and 294-314; these read LITA…YAWT, NQYV…NSLV, and ILPV…TWIL.

The protein belongs to the HesA/MoeB/ThiF family.

The protein resides in the mitochondrion outer membrane. In terms of biological role, catalyzes the ATP-dependent dehydration of threonylcarbamoyladenosine at position 37 (t(6)A37) to form cyclic t(6)A37 (ct(6)A37) in tRNAs that read codons beginning with adenine. The protein is tRNA threonylcarbamoyladenosine dehydratase 2 (TCD2) of Saccharomyces cerevisiae (strain ATCC 204508 / S288c) (Baker's yeast).